A 314-amino-acid polypeptide reads, in one-letter code: Serine protease 46 (314 aa).

The Peptidase S1 domain maps to 44–281 (VVNGKAVEVG…FTQWIKRQIG (238 aa)). C69 and C85 are oxidised to a cystine. Catalysis depends on charge relay system residues H84 and D130. Intrachain disulfides connect C164-C239, C197-C219, and C229-C257. The Charge relay system role is filled by S233. The helical transmembrane segment at 293 to 313 (FLSPFILTGYILLVSLGSLWL) threads the bilayer.

This sequence belongs to the peptidase S1 family.

Its subcellular location is the membrane. The chain is Serine protease 46 (Prss46) from Mus musculus (Mouse).